The chain runs to 815 residues: Dual specificity tyrosine-phosphorylation-regulated kinase mbk-2 (815 aa).

Disordered regions lie at residues 1–49, 67–146, 185–204, and 298–395; these read MAAL…NYTR, PSSF…PLGT, YEFPSGQAQQQRRLGGSQQH, and ALPS…FRPE. Composition is skewed to polar residues over residues 7–25 and 40–49; these read FTRNSRSYGQQPIDVTQQG and SKMSNINYTR. The segment covering 68–78 has biased composition (low complexity); sequence SSFSGASSSSS. Composition is skewed to polar residues over residues 119 to 140 and 190 to 204; these read SGNTLTRSYHQPSSTNSSTSNL and GQAQQQRRLGGSQQH. The span at 301–316 shows a compositional bias: low complexity; sequence SVGTSSSNGSSNSSSG. Polar residues predominate over residues 325–351; it reads LMTQSIGGPNKHLSASHSTLNTASTHD. S361 is subject to Phosphoserine; by cdk-1. Residues 363–391 are compositionally biased toward low complexity; it reads SNESLSRSHTSSSGGSQGGHNSNSGSNSG. A Protein kinase domain is found at 460 to 773; sequence YEVLKVIGKG…PAQALKHKWL (314 aa). Residues 466-474 and K489 contribute to the ATP site; that span reads IGKGSFGQV. The Proton acceptor role is filled by D586. Y620 carries the phosphotyrosine; by autocatalysis modification.

Belongs to the protein kinase superfamily. CMGC Ser/Thr protein kinase family. MNB/DYRK subfamily. As to quaternary structure, part of a complex, consisting of pseudophosphatases egg-3, egg-4, egg-5 and kinase mbk-2. Interacts (via Tyr-618 and Tyr-620) with egg-4 (via tyrosine-protein phosphatase domain) and egg-5 (via tyrosine-protein phosphatase domain); mbk-2 tyrosine phosphorylation enhances the interaction. The interaction inhibits mbk-2 kinase activity and is required for mbk-2 oocyte cortex localization. Interacts (via N-terminus) with egg-3 (via tyrosine-protein phosphatase domain); the interaction does not affect mbk-2 kinase activity, is enhanced by mbk-2 tyrosine phosphorylation status and requires prior binding of mbk-2 to egg-4 and egg-5. Requires Mg(2+) as cofactor. Post-translationally, autophosphorylated.

The protein localises to the cytoplasm. It is found in the cell cortex. It catalyses the reaction L-seryl-[protein] + ATP = O-phospho-L-seryl-[protein] + ADP + H(+). It carries out the reaction L-threonyl-[protein] + ATP = O-phospho-L-threonyl-[protein] + ADP + H(+). The catalysed reaction is L-tyrosyl-[protein] + ATP = O-phospho-L-tyrosyl-[protein] + ADP + H(+). With respect to regulation, activated during oocyte maturation by phosphorylation on Ser-361 by cdk-1. The pseudotyrosine phosphatases egg-4 and egg-5 sequester activated mbk-2 until the meiotic divisions and inhibit mbk-2 kinase activity directly, using a mixed-inhibition mechanism that does not involve tyrosine dephosphorylation. Its function is as follows. Required for oocyte-to-zygote transition in which it phosphorylates oocyte proteins, including mei-1, oma-1, oma-2, mex-5, and mex-6, modifying their activity and/or stability following meiosis. Through phosphorylation of P granule components including meg-1, promotes the disassembly of zygotic P granules in the anterior cytoplasm during zygote polarization, and thus plays a role in P granule distribution and segregation in early stage embryos following meiosis. Functions in both spindle positioning and in the posterior localization of cytoplasmic determinants, including pie-1, pos-1, and pgl-1, in early embryos. Involved in the asymmetric distribution of plk-1 at the 2-cell embryonic stage. This Caenorhabditis briggsae protein is Dual specificity tyrosine-phosphorylation-regulated kinase mbk-2.